Reading from the N-terminus, the 1015-residue chain is Tolloid-like protein 2 (1015 aa).

The N-terminal stretch at 1–25 (MPRATALGALVSLLLLLPLPRGAGG) is a signal peptide. 2 disordered regions span residues 24-49 (GGLGERPDATADYSELDGEEGTEQQL) and 88-130 (VGAT…TTLL). A propeptide spanning residues 26–149 (LGERPDATAD…AKTFSPRVRR (124 aa)) is cleaved from the precursor. Over residues 103–113 (SESSPDTTAMD) the composition is skewed to polar residues. Basic and acidic residues predominate over residues 115-125 (GTKEAGKDGRE). Residues 149–349 (RATTSRTERI…AQARKLYKCP (201 aa)) enclose the Peptidase M12A domain. Residue Asn-171 is glycosylated (N-linked (GlcNAc...) asparagine). Intrachain disulfides connect Cys-192–Cys-348, Cys-212–Cys-234, Cys-214–Cys-215, and Cys-351–Cys-377. A Zn(2+)-binding site is contributed by His-242. Glu-243 is a catalytic residue. His-246 and His-252 together coordinate Zn(2+). CUB domains lie at 351 to 463 (CGET…YEAT) and 464 to 576 (CGGD…FFKE). Residues Asn-361 and Asn-392 are each glycosylated (N-linked (GlcNAc...) asparagine). Disulfide bonds link Cys-404–Cys-426, Cys-464–Cys-490, Cys-517–Cys-539, Cys-580–Cys-592, Cys-588–Cys-601, Cys-603–Cys-616, Cys-620–Cys-646, Cys-673–Cys-695, Cys-736–Cys-747, Cys-743–Cys-756, Cys-758–Cys-771, and Cys-776–Cys-802. The EGF-like 1; calcium-binding domain occupies 576–617 (EVDECSWPDHGGCEHRCVNTLGSYKCACDPGYELAADKKMCE). The 113-residue stretch at 620–732 (CGGFITKLNG…RGFRAHFFSD (113 aa)) folds into the CUB 3 domain. Asn-628 is a glycosylation site (N-linked (GlcNAc...) asparagine). The region spanning 732-772 (DKDECAKDNGGCQHECVNTFGSYLCRCRNGYWLHENGHDCK) is the EGF-like 2; calcium-binding domain. CUB domains lie at 776–888 (CAHK…HSTE) and 889–1005 (CGGR…YTST). N-linked (GlcNAc...) asparagine glycosylation is present at Asn-805. Intrachain disulfides connect Cys-829–Cys-851, Cys-889–Cys-919, and Cys-946–Cys-968. An omega-N-methylarginine mark is found at Arg-963 and Arg-966.

The cofactor is Zn(2+).

It localises to the secreted. Functionally, protease which specifically processes pro-lysyl oxidase. Required for the embryonic development. Predominant protease, which in the development, influences dorsal-ventral patterning and skeletogenesis. The chain is Tolloid-like protein 2 (TLL2) from Homo sapiens (Human).